We begin with the raw amino-acid sequence, 431 residues long: Glucose-1-phosphate adenylyltransferase (431 aa).

Residue lysine 39 participates in beta-D-fructose 1,6-bisphosphate binding. Positions 40, 46, and 52 each coordinate AMP. Tyrosine 114 contacts alpha-D-glucose 1-phosphate. An AMP-binding site is contributed by arginine 130. Residues glycine 179, 194–195, and serine 212 contribute to the alpha-D-glucose 1-phosphate site; that span reads EK. AMP is bound by residues glutamate 370 and arginine 386. Beta-D-fructose 1,6-bisphosphate-binding positions include 419–423 and 429–431; these read REMLR and QER.

Belongs to the bacterial/plant glucose-1-phosphate adenylyltransferase family. Homotetramer.

The catalysed reaction is alpha-D-glucose 1-phosphate + ATP + H(+) = ADP-alpha-D-glucose + diphosphate. It participates in glycan biosynthesis; glycogen biosynthesis. With respect to regulation, allosterically activated by fructose-1,6-bisphosphate (F16BP) and inhibited by AMP. In terms of biological role, involved in the biosynthesis of ADP-glucose, a building block required for the elongation reactions to produce glycogen. Catalyzes the reaction between ATP and alpha-D-glucose 1-phosphate (G1P) to produce pyrophosphate and ADP-Glc. The chain is Glucose-1-phosphate adenylyltransferase from Shigella dysenteriae serotype 1 (strain Sd197).